We begin with the raw amino-acid sequence, 417 residues long: MTELRSERKNGNWDRLFGPFFESWAVFKAPQAKSRHIIAYWTRDQLKALGFYMNSEQRRLPRIVAWQYFVSIQLATALASLFYGISESIGDIVNLGRDLVFIITIIFICFRLVFFAQYAGELDVIIDALEDIYHWSIKGPATKEVQETKRLHFLLFMALIITWFSFLILFMLIKISTPFWIESQTLPFHVSWPFQLHDPSKHPIAYIIIFVSQSTTMLYFLIWLGVVENMGVSLFFELTSALRVLCIELRNLQELCLGDEDMLYRELCRMTKFHQQIILLTDRCNHIFNGAFIMQMLINFLLVSLSLFEVLAAKKNPQVAVEYMIIMLMTLGHLSFWSKFGDMFSKESEQVALAVYEAYDPNVGSKSIHRQFCFFIQRAQKPLIMKASPFPPFNLENYMFILKQCYSILTILANTLE.

At 1 to 62 the chain is on the cytoplasmic side; that stretch reads MTELRSERKN…MNSEQRRLPR (62 aa). The helical transmembrane segment at 63–83 threads the bilayer; that stretch reads IVAWQYFVSIQLATALASLFY. Residues 84–98 lie on the Extracellular side of the membrane; it reads GISESIGDIVNLGRD. The chain crosses the membrane as a helical span at residues 99–119; it reads LVFIITIIFICFRLVFFAQYA. Topologically, residues 120-152 are cytoplasmic; that stretch reads GELDVIIDALEDIYHWSIKGPATKEVQETKRLH. The chain crosses the membrane as a helical span at residues 153–173; it reads FLLFMALIITWFSFLILFMLI. Over 174–206 the chain is Extracellular; that stretch reads KISTPFWIESQTLPFHVSWPFQLHDPSKHPIAY. Residues 207 to 227 traverse the membrane as a helical segment; it reads IIIFVSQSTTMLYFLIWLGVV. The Cytoplasmic portion of the chain corresponds to 228–290; sequence ENMGVSLFFE…TDRCNHIFNG (63 aa). A helical membrane pass occupies residues 291–311; that stretch reads AFIMQMLINFLLVSLSLFEVL. Over 312 to 316 the chain is Extracellular; it reads AAKKN. The helical transmembrane segment at 317 to 337 threads the bilayer; sequence PQVAVEYMIIMLMTLGHLSFW. The Cytoplasmic segment spans residues 338–393; it reads SKFGDMFSKESEQVALAVYEAYDPNVGSKSIHRQFCFFIQRAQKPLIMKASPFPPF. A helical transmembrane segment spans residues 394–414; the sequence is NLENYMFILKQCYSILTILAN. Residues 415 to 417 lie on the Extracellular side of the membrane; that stretch reads TLE.

The protein belongs to the insect chemoreceptor superfamily. Heteromeric odorant receptor channel (TC 1.A.69) family. Or49a subfamily. In terms of assembly, interacts with Orco. Complexes exist early in the endomembrane system in olfactory sensory neurons (OSNs), coupling these complexes to the conserved ciliary trafficking pathway. Expressed in olfactory sensory neurons in the antenna.

It is found in the cell membrane. Odorant receptor which mediates acceptance or avoidance behavior, depending on its substrates. The odorant receptor repertoire encodes a large collection of odor stimuli that vary widely in identity, intensity, and duration. May form a complex with Orco to form odorant-sensing units, providing sensitive and prolonged odorant signaling and calcium permeability. Involved in olfactory communication for modulating aggression through the sensing of the male-specific pheromone 11-cis-vaccenyl acetate (cVA). Although acute exposure to cVA elicites aggression through Or67d olfactory receptor neurons (ORNs), chronic cVA exposure reduces aggression through Or65a ORNs. Moreover, cVA leads to generalized learning with mated females. It is a major component of the male cuticular hydrocarbon profile, but it is not found on virgin females. During copulation, cVA is transferred to the female in ejaculate along with sperm and peptides that decrease her sexual receptivity. The chain is Odorant receptor 65a (Or65a) from Drosophila melanogaster (Fruit fly).